A 548-amino-acid chain; its full sequence is Cilia- and flagella-associated protein 97 (548 aa).

Ser-8 and Ser-19 each carry phosphoserine. Disordered stretches follow at residues 85–297, 407–431, and 497–548; these read NYLT…RQEN, LSRQ…PPKL, and YSPL…LRSH. Positions 91–107 are enriched in basic and acidic residues; sequence GNERKPKFPSKEQHVEN. Over residues 112 to 121 the composition is skewed to low complexity; it reads TRSPSLLTSS. The span at 152-161 shows a compositional bias: acidic residues; it reads DYYTDGEESS. A Phosphothreonine modification is found at Thr-155. A phosphoserine mark is found at Ser-160 and Ser-161. A compositionally biased stretch (low complexity) spans 191-209; it reads KASSSSLSSSSSRSSSDCS. The segment covering 214 to 237 has biased composition (polar residues); that stretch reads DMQNKPDSGSSGKRVSSVTPSSPK. Ser-235 is modified (phosphoserine). Basic residues predominate over residues 238–248; sequence QKCKSGRKSSA. Ser-259 bears the Phosphoserine mark. The span at 264 to 289 shows a compositional bias: polar residues; sequence TDVTPASTPDSSPAQPFELSQSQNQK. Positions 383-460 form a coiled coil; that stretch reads RKNYSFTREE…ALLKRLEAVK (78 aa). Polar residues-rich tracts occupy residues 504 to 514 and 537 to 548; these read SRTSSATSGLS and IQCSNSKVLRSH.

The protein belongs to the CFAP97 family.

In Rattus norvegicus (Rat), this protein is Cilia- and flagella-associated protein 97.